A 759-amino-acid chain; its full sequence is Protein YdeP (759 aa).

Positions 49 and 52 each coordinate [4Fe-4S] cluster.

The protein belongs to the prokaryotic molybdopterin-containing oxidoreductase family. It depends on [4Fe-4S] cluster as a cofactor. Mo-bis(molybdopterin guanine dinucleotide) serves as cofactor.

Functionally, probably involved in acid resistance. In Escherichia coli (strain K12), this protein is Protein YdeP (ydeP).